Here is a 177-residue protein sequence, read N- to C-terminus: Large ribosomal subunit protein uL6 (177 aa).

It belongs to the universal ribosomal protein uL6 family. In terms of assembly, part of the 50S ribosomal subunit.

Functionally, this protein binds to the 23S rRNA, and is important in its secondary structure. It is located near the subunit interface in the base of the L7/L12 stalk, and near the tRNA binding site of the peptidyltransferase center. The polypeptide is Large ribosomal subunit protein uL6 (Aliivibrio fischeri (strain MJ11) (Vibrio fischeri)).